Reading from the N-terminus, the 247-residue chain is 3-deoxy-manno-octulosonate cytidylyltransferase (247 aa).

This sequence belongs to the KdsB family.

It is found in the cytoplasm. The enzyme catalyses 3-deoxy-alpha-D-manno-oct-2-ulosonate + CTP = CMP-3-deoxy-beta-D-manno-octulosonate + diphosphate. It functions in the pathway nucleotide-sugar biosynthesis; CMP-3-deoxy-D-manno-octulosonate biosynthesis; CMP-3-deoxy-D-manno-octulosonate from 3-deoxy-D-manno-octulosonate and CTP: step 1/1. It participates in bacterial outer membrane biogenesis; lipopolysaccharide biosynthesis. In terms of biological role, activates KDO (a required 8-carbon sugar) for incorporation into bacterial lipopolysaccharide in Gram-negative bacteria. The chain is 3-deoxy-manno-octulosonate cytidylyltransferase from Methylorubrum extorquens (strain PA1) (Methylobacterium extorquens).